Reading from the N-terminus, the 75-residue chain is uncharacterized protein (75 aa).

The Glutaredoxin domain occupies 1-75; the sequence is MIKIYSTPTC…KAEIDKLIEK (75 aa). Residues cysteine 10 and cysteine 13 are joined by a disulfide bond.

This sequence belongs to the glutaredoxin family.

This is an uncharacterized protein from Clostridium pasteurianum.